The sequence spans 341 residues: 2-keto-4-carboxy-3-hexenedioate hydratase (341 aa).

Residues H8 and H10 each coordinate Zn(2+). 71–73 (RAS) contributes to the substrate binding site. H178 contributes to the Zn(2+) binding site. 2 residues coordinate substrate: Y194 and H223. E284 acts as the Proton donor/acceptor in catalysis. Substrate is bound at residue R290.

The protein belongs to the metallo-dependent hydrolases superfamily. Homodimer. It depends on Zn(2+) as a cofactor.

It carries out the reaction (3Z)-2-oxo-4-carboxy-3-hexenedioate + H2O = (2S)-2-hydroxy-4-oxobutane-1,2,4-tricarboxylate. Its pathway is secondary metabolite metabolism; lignin degradation. In terms of biological role, contributes to the degradation of lignin at the level of the protocatechuate 4,5-cleavage pathway. Catalyzes the hydration of the double bond of (3Z)-2-keto-4-carboxy-3-hexenedioate (KCH) to (4S)-4-carboxy-4-hydroxy-2-oxoadipate (CHA, also named (2S)-2-hydroxy-4-oxobutane-1,2,4-tricarboxylate). Is involved in the catabolism of both vanillate and syringate. This chain is 2-keto-4-carboxy-3-hexenedioate hydratase, found in Sphingobium sp. (strain NBRC 103272 / SYK-6).